The following is a 738-amino-acid chain: Photosystem I P700 chlorophyll a apoprotein A2 (738 aa).

The next 8 membrane-spanning stretches (helical) occupy residues 46–69 (LFSTHFGHLAIIGLWVSGNLFHIA), 135–158 (LYQGSIFMMILSAWALFAGWLHLQ), 175–199 (LNHHLAVLFGFSSIAWTGHLVHVAI), 273–291 (IAHHHLAIGVIFVIAGHMY), 333–356 (LHFQLGLALASLGVITSLVAQHMY), 372–398 (AALYTHHQYIAIALMCGAFAHGAIFFI), 420–442 (AIISHLSWVSLFLGFHTLGLYVH), and 521–539 (FLVHHAIALGLHTTTLILV). The [4Fe-4S] cluster site is built by C563 and C572. The next 2 helical transmembrane spans lie at 579–600 (AFYLAVFWALNTVGWVTFYWHW) and 647–669 (LAVWSWMFLFGHLVWATGFMFLI). H658, M666, and Y674 together coordinate chlorophyll a. Residue W675 coordinates phylloquinone. The helical transmembrane segment at 711–731 (VVGLAHFTVGYVLTYGAFLIA) threads the bilayer.

This sequence belongs to the PsaA/PsaB family. The PsaA/B heterodimer binds the P700 chlorophyll special pair and subsequent electron acceptors. PSI consists of a core antenna complex that captures photons, and an electron transfer chain that converts photonic excitation into a charge separation. The cyanobacterial PSI reaction center is composed of one copy each of PsaA,B,C,D,E,F,I,J,K,L,M and X, and forms trimeric complexes. The cofactor is PSI electron transfer chain: 5 chlorophyll a, 1 chlorophyll a', 2 phylloquinones and 3 4Fe-4S clusters. PSI core antenna: 90 chlorophyll a, 22 carotenoids, 3 phospholipids and 1 galactolipid. P700 is a chlorophyll a/chlorophyll a' dimer, A0 is one or more chlorophyll a, A1 is one or both phylloquinones and FX is a shared 4Fe-4S iron-sulfur center..

The protein localises to the cellular thylakoid membrane. The catalysed reaction is reduced [plastocyanin] + hnu + oxidized [2Fe-2S]-[ferredoxin] = oxidized [plastocyanin] + reduced [2Fe-2S]-[ferredoxin]. Functionally, psaA and PsaB bind P700, the primary electron donor of photosystem I (PSI), as well as the electron acceptors A0, A1 and FX. PSI is a plastocyanin/cytochrome c6-ferredoxin oxidoreductase, converting photonic excitation into a charge separation, which transfers an electron from the donor P700 chlorophyll pair to the spectroscopically characterized acceptors A0, A1, FX, FA and FB in turn. Oxidized P700 is reduced on the lumenal side of the thylakoid membrane by plastocyanin or cytochrome c6. The protein is Photosystem I P700 chlorophyll a apoprotein A2 of Synechococcus sp. (strain CC9311).